The following is a 333-amino-acid chain: Ferrochelatase (333 aa).

Residues histidine 202 and glutamate 284 each contribute to the Fe cation site.

This sequence belongs to the ferrochelatase family.

It localises to the cytoplasm. It catalyses the reaction heme b + 2 H(+) = protoporphyrin IX + Fe(2+). It participates in porphyrin-containing compound metabolism; protoheme biosynthesis; protoheme from protoporphyrin-IX: step 1/1. In terms of biological role, catalyzes the ferrous insertion into protoporphyrin IX. The protein is Ferrochelatase of Francisella tularensis subsp. mediasiatica (strain FSC147).